The primary structure comprises 356 residues: DNA polymerase IV (356 aa).

Residues 1 to 188 form the UmuC domain; it reads MDTSRKIIHI…IPVTKFYGVG (188 aa). Residues aspartate 11 and aspartate 106 each contribute to the Mg(2+) site. Glutamate 107 is an active-site residue.

Belongs to the DNA polymerase type-Y family. As to quaternary structure, monomer. It depends on Mg(2+) as a cofactor.

It is found in the cytoplasm. It catalyses the reaction DNA(n) + a 2'-deoxyribonucleoside 5'-triphosphate = DNA(n+1) + diphosphate. Functionally, poorly processive, error-prone DNA polymerase involved in untargeted mutagenesis. Copies undamaged DNA at stalled replication forks, which arise in vivo from mismatched or misaligned primer ends. These misaligned primers can be extended by PolIV. Exhibits no 3'-5' exonuclease (proofreading) activity. May be involved in translesional synthesis, in conjunction with the beta clamp from PolIII. The sequence is that of DNA polymerase IV from Listeria monocytogenes serotype 4b (strain F2365).